Here is a 903-residue protein sequence, read N- to C-terminus: Disintegrin and metalloproteinase domain-containing protein 12 (903 aa).

An N-terminal signal peptide occupies residues 1-31 (MAERPARRAPPARALLLALAGALLAPRAARG). The propeptide occupies 32-205 (MSLWDQRGTY…SQMRARRHKR (174 aa)). 3 N-linked (GlcNAc...) asparagine glycosylation sites follow: N112, N147, and N157. A Cysteine switch motif is present at residues 175-182 (GLCGSQHN). C177 is a Zn(2+) binding site. N-linked (GlcNAc...) asparagine glycans are attached at residues N182 and N185. Topologically, residues 206–706 (ETLKMTKYVE…GPIRQADNQG (501 aa)) are extracellular. Residues 212–414 (KYVELVIVAD…GMGMCLFNLP (203 aa)) form the Peptidase M12B domain. Intrachain disulfides connect C323–C409, C365–C393, and C367–C376. Position 348 (H348) interacts with Zn(2+). E349 is an active-site residue. Zn(2+) is bound by residues H352 and H358. Positions 422-508 (GRKCGNGYVE…HCPANVYLHD (87 aa)) constitute a Disintegrin domain. N450 is a glycosylation site (N-linked (GlcNAc...) asparagine). C480 and C500 form a disulfide bridge. N649 carries N-linked (GlcNAc...) asparagine glycosylation. The EGF-like domain occupies 654–686 (GVHKCAMQCHGRGVCNNRKNCHCEAHWAPPFCD). 3 disulfide bridges follow: C658–C668, C662–C674, and C676–C685. A helical membrane pass occupies residues 707 to 727 (LTVGILVSILCLLAAGFVVYL). The Cytoplasmic portion of the chain corresponds to 728–903 (KRKTLMRLLF…PRPSHNAYIK (176 aa)). Disordered regions lie at residues 753-790 (SRTP…HSLK) and 819-903 (HQTP…AYIK). 2 consecutive short sequence motifs (SH3-binding; class II) follow at residues 824–830 (APSGPAR) and 846–852 (KPSPPQK). 3 short sequence motifs (SH3-binding; class I) span residues 830-837 (RPLPASPA), 852-858 (KPLPADP), and 881-887 (RPAPIRP). Positions 847–856 (PSPPQKPLPA) are enriched in pro residues. Y901 is subject to Phosphotyrosine; by SRC.

In terms of assembly, interacts with alpha-actinin-2 and with syndecans. Interacts with SH3PXD2A. Interacts with FST3. Interacts with RACK1; the interaction is required for PKC-dependent translocation of ADAM12 to the cell membrane. Zn(2+) is required as a cofactor. In terms of processing, the precursor is cleaved by a furin endopeptidase. In terms of tissue distribution, expressed during early developing mesenchymal cells that give rise to skeletal muscle, bones and visceral organs. Not expressed in adult normal muscle but expressed in regenerating muscle.

The protein localises to the membrane. In terms of biological role, involved in skeletal muscle regeneration, specifically at the onset of cell fusion. Also involved in macrophage-derived giant cells (MGC) and osteoclast formation from mononuclear precursors. The sequence is that of Disintegrin and metalloproteinase domain-containing protein 12 (Adam12) from Mus musculus (Mouse).